The following is a 72-amino-acid chain: Large ribosomal subunit protein bL28 (72 aa).

Belongs to the bacterial ribosomal protein bL28 family.

The polypeptide is Large ribosomal subunit protein bL28 (Chlorobium chlorochromatii (strain CaD3)).